The following is a 201-amino-acid chain: Proteasome subunit beta 1 (201 aa).

A propeptide (removed in mature form; by autocatalysis) is located at residue Met-1. The Nucleophile role is filled by Thr-2.

The protein belongs to the peptidase T1B family. The 20S proteasome core is composed of 14 alpha and 14 beta subunits that assemble into four stacked heptameric rings, resulting in a barrel-shaped structure. The two inner rings, each composed of seven catalytic beta subunits, are sandwiched by two outer rings, each composed of seven alpha subunits. The catalytic chamber with the active sites is on the inside of the barrel. Has a gated structure, the ends of the cylinder being occluded by the N-termini of the alpha-subunits. Is capped at one or both ends by the proteasome regulatory ATPase, PAN.

The protein resides in the cytoplasm. The enzyme catalyses Cleavage of peptide bonds with very broad specificity.. With respect to regulation, the formation of the proteasomal ATPase PAN-20S proteasome complex, via the docking of the C-termini of PAN into the intersubunit pockets in the alpha-rings, triggers opening of the gate for substrate entry. Interconversion between the open-gate and close-gate conformations leads to a dynamic regulation of the 20S proteasome proteolysis activity. Functionally, component of the proteasome core, a large protease complex with broad specificity involved in protein degradation. In Pyrobaculum calidifontis (strain DSM 21063 / JCM 11548 / VA1), this protein is Proteasome subunit beta 1.